The sequence spans 435 residues: rRNA methyltransferase 3A, mitochondrial (435 aa).

The transit peptide at 1-42 (MAALMYNVSRGLVMLGERSLFQRERYQILVNSRRFLRGLRRR) directs the protein to the mitochondrion. Residues 314–324 (KQLVSGQTENV) show a composition bias toward polar residues. Positions 314–351 (KQLVSGQTENVSSDDYSESDSDDDDDEEEDEDSLPHVK) are disordered. Residues 328-345 (DYSESDSDDDDDEEEDED) are compositionally biased toward acidic residues. Residues Gly-369 and Leu-402 each coordinate S-adenosyl-L-methionine.

The protein belongs to the class IV-like SAM-binding methyltransferase superfamily. RNA methyltransferase TrmH family.

It localises to the mitochondrion. It carries out the reaction a uridine in rRNA + S-adenosyl-L-methionine = a 2'-O-methyluridine in rRNA + S-adenosyl-L-homocysteine + H(+). Its function is as follows. S-adenosyl-L-methionine-dependent 2'-O-ribose methyltransferase that catalyzes the formation of 2'-O-methylguanosine at position 1485 (Gm1485) in the mitochondrial large subunit ribosomal RNA (mtLSU rRNA), a conserved modification in the peptidyl transferase domain of the mtLSU rRNA. Also required for formation of 2'-O-methyluridine at position 1484 (Um1484) mediated by MRM2. The chain is rRNA methyltransferase 3A, mitochondrial (mrm3a) from Danio rerio (Zebrafish).